We begin with the raw amino-acid sequence, 325 residues long: D site-binding protein (325 aa).

3 disordered regions span residues 1–98 (MARP…AGPS), 124–203 (LEHG…EVLM), and 230–256 (FSEE…QKDE). Residues 17 to 28 (GPAGAPPGGGAL) are compositionally biased toward gly residues. Residues 71 to 80 (AGPADAPSGA) show a composition bias toward low complexity. Ser86 carries the phosphoserine modification. Residues 88–98 (RGRSGPVAGPS) are compositionally biased toward low complexity. Residues 129–153 (PPSPPPPGGLSPAPSPARTPAPSPG) are compositionally biased toward pro residues. Positions 154-171 (PGSCSSSSPRSSPGHAPA) are enriched in low complexity. Residues 255-318 (DEKYWSRRYK…SHYRAVLSRY (64 aa)) enclose the bZIP domain. Positions 257–279 (KYWSRRYKNNEAAKRSRDARRLK) are basic motif. The tract at residues 283–297 (ISVRAAFLEKENALL) is leucine-zipper.

The protein belongs to the bZIP family. PAR subfamily. As to quaternary structure, binds DNA as a homodimer or a heterodimer. Can form a heterodimer with TEF. In terms of tissue distribution, expressed in the suprachiasmatic nuclei (SCN) and in most peripheral tissues, with a strong circadian rhythmicity.

It is found in the nucleus. In terms of biological role, this transcriptional activator recognizes and binds to the sequence 5'-RTTAYGTAAY-3' found in the promoter of genes such as albumin, CYP2A4 and CYP2A5. It is not essential for circadian rhythm generation, but modulates important clock output genes. May be a direct target for regulation by the circadian pacemaker component clock. May affect circadian period and sleep regulation. This chain is D site-binding protein (Dbp), found in Mus musculus (Mouse).